Here is a 121-residue protein sequence, read N- to C-terminus: Small ribosomal subunit protein uS13 (121 aa).

The segment at 92 to 121 (HRMGLPCRGQKTKTNARTRKGPRRGAARRK) is disordered. Residues 101 to 121 (QKTKTNARTRKGPRRGAARRK) are compositionally biased toward basic residues.

The protein belongs to the universal ribosomal protein uS13 family. As to quaternary structure, part of the 30S ribosomal subunit. Forms a loose heterodimer with protein S19. Forms two bridges to the 50S subunit in the 70S ribosome.

Functionally, located at the top of the head of the 30S subunit, it contacts several helices of the 16S rRNA. In the 70S ribosome it contacts the 23S rRNA (bridge B1a) and protein L5 of the 50S subunit (bridge B1b), connecting the 2 subunits; these bridges are implicated in subunit movement. Contacts the tRNAs in the A and P-sites. The protein is Small ribosomal subunit protein uS13 of Desulfotalea psychrophila (strain LSv54 / DSM 12343).